Consider the following 308-residue polypeptide: Putative transcription elongation factor S-II (308 aa).

The TFIIS N-terminal domain maps to 5–84 (EETQSLCKQV…KDWKNVVDGK (80 aa)). Residues 82–126 (DGKSKSQDDGGAPPAKKHRKESVEEAKPEKKKIEAPYKRPEPSSR) form a disordered region. A compositionally biased stretch (basic and acidic residues) spans 102-125 (ESVEEAKPEKKKIEAPYKRPEPSS). One can recognise a TFIIS central domain in the interval 148–263 (TRLKSAQLLL…EHQMSVQQGT (116 aa)). The segment at 266 to 306 (DMFKCGKCGKKNCTYTQLQTRSSDEPMTTFVFCLECGNRWK) adopts a TFIIS-type zinc-finger fold. Zn(2+) contacts are provided by cysteine 270, cysteine 273, cysteine 298, and cysteine 301.

It belongs to the TFS-II family.

It is found in the nucleus. Functionally, necessary for efficient RNA polymerase II transcription elongation past template-encoded arresting sites. The arresting sites in DNA have the property of trapping a certain fraction of elongating RNA polymerases that pass through, resulting in locked ternary complexes. Cleavage of the nascent transcript by S-II allows the resumption of elongation from the new 3'-terminus. The chain is Putative transcription elongation factor S-II from Caenorhabditis elegans.